The primary structure comprises 147 residues: D-aminoacyl-tRNA deacylase (147 aa).

The Gly-cisPro motif, important for rejection of L-amino acids motif lies at 138–139 (GP).

Belongs to the DTD family. In terms of assembly, homodimer.

It is found in the cytoplasm. It catalyses the reaction glycyl-tRNA(Ala) + H2O = tRNA(Ala) + glycine + H(+). The enzyme catalyses a D-aminoacyl-tRNA + H2O = a tRNA + a D-alpha-amino acid + H(+). An aminoacyl-tRNA editing enzyme that deacylates mischarged D-aminoacyl-tRNAs. Also deacylates mischarged glycyl-tRNA(Ala), protecting cells against glycine mischarging by AlaRS. Acts via tRNA-based rather than protein-based catalysis; rejects L-amino acids rather than detecting D-amino acids in the active site. By recycling D-aminoacyl-tRNA to D-amino acids and free tRNA molecules, this enzyme counteracts the toxicity associated with the formation of D-aminoacyl-tRNA entities in vivo and helps enforce protein L-homochirality. The sequence is that of D-aminoacyl-tRNA deacylase from Prosthecochloris aestuarii (strain DSM 271 / SK 413).